The following is a 368-amino-acid chain: Isopentenyl-diphosphate delta-isomerase (368 aa).

7–8 lines the substrate pocket; that stretch reads RK. FMN is bound by residues T65, 66–68, S96, and N125; that span reads GMT. 96-98 serves as a coordination point for substrate; that stretch reads SQR. Q160 contacts substrate. E161 is a Mg(2+) binding site. Residues K193, S218, T223, 275-277, and 296-297 each bind FMN; these read GIR and AL.

The protein belongs to the IPP isomerase type 2 family. As to quaternary structure, homooctamer. Dimer of tetramers. FMN is required as a cofactor. NADPH serves as cofactor. Requires Mg(2+) as cofactor.

It is found in the cytoplasm. It carries out the reaction isopentenyl diphosphate = dimethylallyl diphosphate. Involved in the biosynthesis of isoprenoids. Catalyzes the 1,3-allylic rearrangement of the homoallylic substrate isopentenyl (IPP) to its allylic isomer, dimethylallyl diphosphate (DMAPP). This is Isopentenyl-diphosphate delta-isomerase from Saccharolobus islandicus (strain M.16.27) (Sulfolobus islandicus).